Here is a 113-residue protein sequence, read N- to C-terminus: Protein suex-1 (113 aa).

Residues 1–22 (MQSLLVFCLATIILSNFTEASA) form the signal peptide.

The sequence is that of Protein suex-1 from Caenorhabditis elegans.